The primary structure comprises 189 residues: UPF0301 protein RAF_ORF0041 (189 aa).

This sequence belongs to the UPF0301 (AlgH) family.

In Rickettsia africae (strain ESF-5), this protein is UPF0301 protein RAF_ORF0041.